Reading from the N-terminus, the 174-residue chain is Methylated-DNA--protein-cysteine methyltransferase (174 aa).

Cys141 serves as the catalytic Nucleophile; methyl group acceptor.

The protein belongs to the MGMT family.

The protein localises to the cytoplasm. It carries out the reaction a 6-O-methyl-2'-deoxyguanosine in DNA + L-cysteinyl-[protein] = S-methyl-L-cysteinyl-[protein] + a 2'-deoxyguanosine in DNA. The catalysed reaction is a 4-O-methyl-thymidine in DNA + L-cysteinyl-[protein] = a thymidine in DNA + S-methyl-L-cysteinyl-[protein]. Its function is as follows. Involved in the cellular defense against the biological effects of O6-methylguanine (O6-MeG) and O4-methylthymine (O4-MeT) in DNA. Repairs the methylated nucleobase in DNA by stoichiometrically transferring the methyl group to a cysteine residue in the enzyme. This is a suicide reaction: the enzyme is irreversibly inactivated. This Thermococcus gammatolerans (strain DSM 15229 / JCM 11827 / EJ3) protein is Methylated-DNA--protein-cysteine methyltransferase.